Here is a 74-residue protein sequence, read N- to C-terminus: Capsid protein VP2 (74 aa).

Its subcellular location is the virion. In terms of biological role, this extremely basic protein may tightly bind to SSV1 DNA. Essential for virus function. In Saccharolobus solfataricus (Sulfolobus solfataricus), this protein is Capsid protein VP2 (VP2).